The sequence spans 426 residues: Cytochrome c biogenesis protein CcsB (426 aa).

3 helical membrane-spanning segments follow: residues 11-31 (LRVA…GTAI), 69-89 (SVWF…CSWR), and 159-179 (VGPL…VWGV).

The protein belongs to the Ccs1/CcsB family. As to quaternary structure, may interact with CcsA.

It localises to the cellular thylakoid membrane. Functionally, required during biogenesis of c-type cytochromes (cytochrome c6 and cytochrome f) at the step of heme attachment. The chain is Cytochrome c biogenesis protein CcsB from Synechococcus sp. (strain CC9902).